The following is a 240-amino-acid chain: tRNA pseudouridine synthase A (240 aa).

D50 acts as the Nucleophile in catalysis. Y109 serves as a coordination point for substrate.

It belongs to the tRNA pseudouridine synthase TruA family. Homodimer.

It carries out the reaction uridine(38/39/40) in tRNA = pseudouridine(38/39/40) in tRNA. In terms of biological role, formation of pseudouridine at positions 38, 39 and 40 in the anticodon stem and loop of transfer RNAs. The protein is tRNA pseudouridine synthase A of Campylobacter jejuni subsp. jejuni serotype O:6 (strain 81116 / NCTC 11828).